A 382-amino-acid polypeptide reads, in one-letter code: Carboxynorspermidine/carboxyspermidine decarboxylase (382 aa).

K41 carries the post-translational modification N6-(pyridoxal phosphate)lysine. Substrate is bound by residues E236 and D272.

It belongs to the Orn/Lys/Arg decarboxylase class-II family. NspC subfamily. Homodimer. Requires pyridoxal 5'-phosphate as cofactor.

The protein resides in the cytoplasm. It catalyses the reaction carboxynorspermidine + H(+) = norspermidine + CO2. It carries out the reaction carboxyspermidine + H(+) = spermidine + CO2. Its function is as follows. Catalyzes the decarboxylation of carboxynorspermidine and carboxyspermidine in vitro. In vivo, responsible for synthesizing spermidine, but not sym-norspermidine. This is Carboxynorspermidine/carboxyspermidine decarboxylase from Campylobacter jejuni subsp. jejuni serotype O:6 (strain 81116 / NCTC 11828).